The chain runs to 429 residues: Serine hydroxymethyltransferase (429 aa).

(6S)-5,6,7,8-tetrahydrofolate contacts are provided by residues leucine 130 and glycine 134–leucine 136. Lysine 239 bears the N6-(pyridoxal phosphate)lysine mark.

This sequence belongs to the SHMT family. As to quaternary structure, homodimer. Requires pyridoxal 5'-phosphate as cofactor.

It localises to the cytoplasm. The enzyme catalyses (6R)-5,10-methylene-5,6,7,8-tetrahydrofolate + glycine + H2O = (6S)-5,6,7,8-tetrahydrofolate + L-serine. It participates in one-carbon metabolism; tetrahydrofolate interconversion. The protein operates within amino-acid biosynthesis; glycine biosynthesis; glycine from L-serine: step 1/1. Functionally, catalyzes the reversible interconversion of serine and glycine with tetrahydrofolate (THF) serving as the one-carbon carrier. This reaction serves as the major source of one-carbon groups required for the biosynthesis of purines, thymidylate, methionine, and other important biomolecules. Also exhibits THF-independent aldolase activity toward beta-hydroxyamino acids, producing glycine and aldehydes, via a retro-aldol mechanism. The chain is Serine hydroxymethyltransferase from Phenylobacterium zucineum (strain HLK1).